The chain runs to 431 residues: Galanin-like G-protein coupled receptor npr-9 (431 aa).

The Extracellular segment spans residues 1–34 (MEFENLTKEEMEQLQKIYDDTISFERKIGIIIPT). N5 is a glycosylation site (N-linked (GlcNAc...) asparagine). Residues 35 to 55 (IFAVIILVGLVGNALVVIVAF) form a helical membrane-spanning segment. At 56–66 (GRQMRNSTNTL) the chain is on the cytoplasmic side. The helical transmembrane segment at 67–87 (IIGLAISDLMFLLLCVPFTAV) threads the bilayer. Residues 88-101 (DYAAPTWIFPEWTC) are Extracellular-facing. C101 and C182 are disulfide-bonded. A helical membrane pass occupies residues 102-124 (SMINFFQHTSAYCSVWTLTLMAL). Residues 125–143 (DRYLAVVYPVESMTLRTPR) lie on the Cytoplasmic side of the membrane. The helical transmembrane segment at 144 to 164 (NTVIALCFIYIIIIASQIPVG) threads the bilayer. Over 165–203 (RMHGIYVYDFIMEKRSTCAILTIATAEATPTMARTYFMT) the chain is Extracellular. Residues 204-224 (FNVFGYVLPLGISVVLYGLML) traverse the membrane as a helical segment. Residues 225–268 (RKLWDMPRPGNSQSVGGRNLTNRDSGSSIRRRPEATAAKRKVTR) lie on the Cytoplasmic side of the membrane. Positions 235–252 (NSQSVGGRNLTNRDSGSS) are enriched in polar residues. Positions 235–257 (NSQSVGGRNLTNRDSGSSIRRRP) are disordered. A helical membrane pass occupies residues 269 to 289 (LVLCVLITWALCWLPLNVCFF). The Extracellular portion of the chain corresponds to 290–298 (MSGLAYPEP). A helical membrane pass occupies residues 299–319 (LVISHGVIMVIVQIASQVLAY). Over 320–431 (TNSCLNPILY…RSKSTRSYNL (112 aa)) the chain is Cytoplasmic. Over residues 393-414 (SLLKDNSSSATSVQPLRTSIQA) the composition is skewed to polar residues. Residues 393–431 (SLLKDNSSSATSVQPLRTSIQAKKTKNIGRSKSTRSYNL) form a disordered region. A compositionally biased stretch (basic residues) spans 415-425 (KKTKNIGRSKS).

This sequence belongs to the G-protein coupled receptor 1 family. In terms of tissue distribution, exclusively expressed in the AIB interneuron.

The protein localises to the cell membrane. Functionally, neuropeptide that controls movement such as roaming, foraging and backwards locomotion or 'reversals' in response to environmental cues such as food availability or volatile odorants such as octanol. Antagonizes AIB interneuron activity to control bacterial colonization and may negatively regulate the expression of immunity-related genes such as pqm-1 and dod-22 in response to infection by P.aeruginosa. This Caenorhabditis elegans protein is Galanin-like G-protein coupled receptor npr-9.